Here is a 42-residue protein sequence, read N- to C-terminus: Cytochrome b559 subunit beta (42 aa).

Residues 17 to 33 (WLAIHAIGIPAVFFIGS) form a helical membrane-spanning segment. His21 lines the heme pocket.

The protein belongs to the PsbE/PsbF family. As to quaternary structure, heterodimer of an alpha subunit and a beta subunit. PSII is composed of 1 copy each of membrane proteins PsbA, PsbB, PsbC, PsbD, PsbE, PsbF, PsbH, PsbI, PsbJ, PsbK, PsbL, PsbM, PsbT, PsbX, PsbY, PsbZ, Psb30/Ycf12, at least 3 peripheral proteins of the oxygen-evolving complex and a large number of cofactors. It forms dimeric complexes. Heme b serves as cofactor.

It is found in the plastid. Its subcellular location is the cyanelle thylakoid membrane. In terms of biological role, this b-type cytochrome is tightly associated with the reaction center of photosystem II (PSII). PSII is a light-driven water:plastoquinone oxidoreductase that uses light energy to abstract electrons from H(2)O, generating O(2) and a proton gradient subsequently used for ATP formation. It consists of a core antenna complex that captures photons, and an electron transfer chain that converts photonic excitation into a charge separation. The protein is Cytochrome b559 subunit beta of Cyanophora paradoxa.